We begin with the raw amino-acid sequence, 306 residues long: Mitochondrial 2-oxoglutarate/malate carrier protein (306 aa).

Solcar repeat units follow at residues 7-95 (VPNV…LLER), 103-194 (LSFG…AKQA), and 203-292 (DGIF…MNAA). 6 helical membrane-spanning segments follow: residues 9–38 (NVVKFAFGGTAGMGATLVVQPLDLVKNRMQ), 72–93 (SAGLLRQATYTTTRLGTYAFLL), 108–122 (KAVLGMTAGGIGSFV), 172–192 (PTVLRAMVVNAAQLATYSQAK), 205–226 (IFCHFLASMISGLATTIASMPV), and 268–286 (FTPYYMRLGPHTVLTFIIL).

The protein belongs to the mitochondrial carrier (TC 2.A.29) family. Interacts with ant-1.1 and ced-9. In terms of tissue distribution, ubiquitously expressed, but highly expressed in the anterior pharynx.

Its subcellular location is the mitochondrion. The protein resides in the mitochondrion inner membrane. It carries out the reaction (S)-malate(in) + 2-oxoglutarate(out) = (S)-malate(out) + 2-oxoglutarate(in). The enzyme catalyses malonate(in) + 2-oxoglutarate(out) = malonate(out) + 2-oxoglutarate(in). The catalysed reaction is succinate(in) + 2-oxoglutarate(out) = succinate(out) + 2-oxoglutarate(in). It catalyses the reaction maleate(in) + 2-oxoglutarate(out) = maleate(out) + 2-oxoglutarate(in). It carries out the reaction oxaloacetate(in) + 2-oxoglutarate(out) = oxaloacetate(out) + 2-oxoglutarate(in). In terms of biological role, catalyzes the transport of 2-oxoglutarate (alpha-oxoglutarate) across the inner mitochondrial membrane in an electroneutral exchange for malate. Can also exchange 2-oxoglutarate for other dicarboxylic acids such as malonate, succinate, maleate and oxaloacetate, although with lower affinity. Contributes to several metabolic processes, including the malate-aspartate shuttle, the oxoglutarate/isocitrate shuttle, in gluconeogenesis from lactate, and in nitrogen metabolism. Maintains mitochondrial fusion and fission events, and the organization and morphology of cristae. Regulator of apoptosis, insulin secretion and germline proliferation. Furthermore, plays a role in the oxidative stress response regulating endogenous levels of reactive oxygen species (ROS). Involved in the regulation of lin-35/Rb-mediated apoptosis in the germline. This is Mitochondrial 2-oxoglutarate/malate carrier protein from Caenorhabditis elegans.